Consider the following 690-residue polypeptide: MAKKKSEEHSGTDANDSDYQEEPNFDDPPGFVDNISDEDLLGDMLAQRPSEADGVESVVVVDNIPKVEPVRLEKLKLVINKLFSNYGEIVNVVYPVDEEGKTKGYAFMEYKQARQAEEAVKKLNNHRLDKNHTFAVNLFTDFQKYENIPEKWEPPTVQTFKVQSDLYNFINDPDTYDQYCVAAETAPNCVQVGFWQNVLPEPFELETRERFTDTFVKWSPLGTYVVTFHKPGVAIWGGSSFQKIQKFPHPGTQFVEFSPCENYLVTYGPTPTGQKIIIWDIRTGAEKRSFVADGMSVLSMFRWSHDDKFVARMGENSIHIYETPSFYLLDLKSIKIPGIRGFSWSPTDNVIAYWVEEQNQIPARVTLMEIPKKREIRNKNLFHVADCKLHWQKSGDYLCVKVDRYSKLKKDKKDLDVKFLGMFYNFEIFHMREKEIPVDSVEIRELILAFAWEPVGNKFSIIHGETNSSNVSFYEVNKGVKPSLVKRLEKKSCTHLFWSPRGQFIVMANLTMGTFEFVDSTNDYIITASPDHFRASEVEWDPTGRYVVTGVSSWKVKEDTGFNMYTFQGRIIKRTILKNFVQFLWRPRPPTLLSEEKQKEIKKNLKKYYAAFEQKDRLRLTRASKELLEKRSQLRETFMEYRNKRIAEWAEQKSRRIMLRGHVDTDNLETDEVDEEIVEFLVKEEVTLLE.

Basic and acidic residues predominate over residues 1–11; that stretch reads MAKKKSEEHSG. Residues 1–33 form a disordered region; sequence MAKKKSEEHSGTDANDSDYQEEPNFDDPPGFVD. Residues 15 to 25 are compositionally biased toward acidic residues; the sequence is NDSDYQEEPNF. The 85-residue stretch at 57–141 folds into the RRM domain; it reads SVVVVDNIPK…HTFAVNLFTD (85 aa). WD repeat units follow at residues 207 to 246, 293 to 331, 334 to 369, 442 to 484, and 530 to 575; these read TRER…KIQK, DGMS…LLDL, IKIP…TLME, EIRE…KPSL, and PDHF…IKRT. Positions 595–645 form a coiled coil; it reads EEKQKEIKKNLKKYYAAFEQKDRLRLTRASKELLEKRSQLRETFMEYRNKR.

It belongs to the eIF-3 subunit B family. Component of the eukaryotic translation initiation factor 3 (eIF-3) complex. The eIF-3 complex interacts with pix. Interacts with mxt.

It localises to the cytoplasm. Its function is as follows. RNA-binding component of the eukaryotic translation initiation factor 3 (eIF-3) complex, which is involved in protein synthesis of a specialized repertoire of mRNAs and, together with other initiation factors, stimulates binding of mRNA and methionyl-tRNAi to the 40S ribosome. The eIF-3 complex specifically targets and initiates translation of a subset of mRNAs involved in cell proliferation. The chain is Eukaryotic translation initiation factor 3 subunit B from Drosophila melanogaster (Fruit fly).